Reading from the N-terminus, the 50-residue chain is Large ribosomal subunit protein bL32A (50 aa).

Positions 1–19 (MAVPKRRKSRSNTRHRRSQ) are enriched in basic residues. A disordered region spans residues 1–21 (MAVPKRRKSRSNTRHRRSQWK).

It belongs to the bacterial ribosomal protein bL32 family.

In Saccharopolyspora erythraea (strain ATCC 11635 / DSM 40517 / JCM 4748 / NBRC 13426 / NCIMB 8594 / NRRL 2338), this protein is Large ribosomal subunit protein bL32A.